Reading from the N-terminus, the 436-residue chain is Probable mediator of RNA polymerase II transcription subunit 26b (436 aa).

A disordered region spans residues 71–111; that stretch reads PGDDEANRGTTGNGGGGTAVDEDYEVAGGSKESKANSSRGD. In terms of domain architecture, TFIIS N-terminal spans 139–214; the sequence is KEVARIKEIL…AEWKELVDQW (76 aa). Residues 263 to 376 form a disordered region; that stretch reads HFFDSLDFDG…PQQEKLKGLD (114 aa). Composition is skewed to basic and acidic residues over residues 276-290 and 332-350; these read NSEE…ERRP and TEQR…EKPM. A coiled-coil region spans residues 382–402; sequence EFAKRKLQESYQHHENAKKQR. Residues 408 to 436 are disordered; the sequence is EMIPKQGSAQKPQLKRPGMSNRNWANGRK. Residues 427–436 are compositionally biased toward polar residues; that stretch reads SNRNWANGRK.

This sequence belongs to the Mediator complex subunit 26 family. As to quaternary structure, component of the Mediator complex.

The protein resides in the nucleus. Functionally, component of the Mediator complex, a coactivator involved in the regulated transcription of nearly all RNA polymerase II-dependent genes. Mediator functions as a bridge to convey information from gene-specific regulatory proteins to the basal RNA polymerase II transcription machinery. The Mediator complex, having a compact conformation in its free form, is recruited to promoters by direct interactions with regulatory proteins and serves for the assembly of a functional preinitiation complex with RNA polymerase II and the general transcription factors. May play a role in transcription elongation. The polypeptide is Probable mediator of RNA polymerase II transcription subunit 26b (MED26B) (Arabidopsis thaliana (Mouse-ear cress)).